The chain runs to 306 residues: MKALRAVSLANTAVMLLAVLWGAWVTSSDSGDGCGASWPLCKGTFMPDWDYAAIVEFGHRVVSALAGLLSVAVLVWVARVRPSETRLKRLAFGTFFFVVLQGGLGAAAVLRPQPDLVMALHFGFSLLCFTFALLVTVALGQGERAAFQRPDVSAQPVAPGLRTQIWGLAVYTYLVVYLGAYVRHLGASMACTGWPLCNGELIPPLYGPVGANFAHRLGAALAVVLVLRLWWTARRLTERDDLRRGAAWALALMAAQVASGALFPLGYLNLLTQLLHTGLITGFWGVLSYLCYLTLPVGRETVAVSA.

Residues 1 to 5 (MKALR) are Cytoplasmic-facing. Residues 6 to 26 (AVSLANTAVMLLAVLWGAWVT) traverse the membrane as a helical segment. Residues 27 to 56 (SSDSGDGCGASWPLCKGTFMPDWDYAAIVE) are Extracellular-facing. Cysteine 34 and cysteine 41 are joined by a disulfide. Residue glutamate 56 is part of the active site. The chain crosses the membrane as a helical span at residues 57–77 (FGHRVVSALAGLLSVAVLVWV). Histidine 59 serves as a coordination point for heme o. Topologically, residues 78–89 (ARVRPSETRLKR) are cytoplasmic. The helical transmembrane segment at 90 to 110 (LAFGTFFFVVLQGGLGAAAVL) threads the bilayer. At 111-116 (RPQPDL) the chain is on the extracellular side. The helical transmembrane segment at 117–137 (VMALHFGFSLLCFTFALLVTV) threads the bilayer. Histidine 121 provides a ligand contact to heme o. Topologically, residues 138 to 164 (ALGQGERAAFQRPDVSAQPVAPGLRTQ) are cytoplasmic. The chain crosses the membrane as a helical span at residues 165-185 (IWGLAVYTYLVVYLGAYVRHL). Over 186–206 (GASMACTGWPLCNGELIPPLY) the chain is Extracellular. Cysteine 191 and cysteine 197 are disulfide-bonded. A helical transmembrane segment spans residues 207 to 227 (GPVGANFAHRLGAALAVVLVL). Histidine 215 contributes to the heme b binding site. The Cytoplasmic segment spans residues 228 to 247 (RLWWTARRLTERDDLRRGAA). The chain crosses the membrane as a helical span at residues 248 to 268 (WALALMAAQVASGALFPLGYL). The Extracellular segment spans residues 269 to 277 (NLLTQLLHT). Histidine 276 contributes to the heme b binding site. A helical transmembrane segment spans residues 278 to 298 (GLITGFWGVLSYLCYLTLPVG). Over 299-306 (RETVAVSA) the chain is Cytoplasmic.

The protein belongs to the COX15/CtaA family. Type 1 subfamily. As to quaternary structure, interacts with CtaB. It depends on heme b as a cofactor.

The protein localises to the cell membrane. The enzyme catalyses Fe(II)-heme o + 2 A + H2O = Fe(II)-heme a + 2 AH2. It participates in porphyrin-containing compound metabolism; heme A biosynthesis; heme A from heme O: step 1/1. Its function is as follows. Catalyzes the conversion of heme O to heme A by two successive hydroxylations of the methyl group at C8. The first hydroxylation forms heme I, the second hydroxylation results in an unstable dihydroxymethyl group, which spontaneously dehydrates, resulting in the formyl group of heme A. The chain is Heme A synthase from Symbiobacterium thermophilum (strain DSM 24528 / JCM 14929 / IAM 14863 / T).